Here is a 104-residue protein sequence, read N- to C-terminus: 2,4-dinitrotoluene dioxygenase system, ferredoxin component (104 aa).

A disordered region spans residues M1–R21. The Rieske domain occupies W5–L101. 4 residues coordinate [2Fe-2S] cluster: C45, H47, C64, and H67.

It belongs to the bacterial ring-hydroxylating dioxygenase ferredoxin component family. As to quaternary structure, the 2,4-dinitrotoluene dioxygenase (DNTDO) multicomponent enzyme system is composed of an electron transfer component and a dioxygenase component (iron sulfur protein (ISP)). The electron transfer component is composed of a ferredoxin reductase (DntAa) and a ferredoxin (DntAb), and the dioxygenase component is formed of a large alpha subunit (DntAc) and a small beta subunit (DntAd). It depends on [2Fe-2S] cluster as a cofactor.

Functionally, component of the 2,4-dinitrotoluene dioxygenase (DNTDO) multicomponent enzyme system which catalyzes the incorporation of both atoms of molecular oxygen into 2,4-dinitrotoluene (DNT) to form 4-methyl-5-nitrocatechol (MNC) and nitrite. Functions as an intermediate electron transfer protein via a specific interaction with iron sulfur protein components (ISP)(DntAc and DntAd). Also able to convert naphthalene to cis-(1R,2S)-dihydroxy-1,2-dihydronaphthalene. The polypeptide is 2,4-dinitrotoluene dioxygenase system, ferredoxin component (Burkholderia sp. (strain RASC)).